A 391-amino-acid polypeptide reads, in one-letter code: Secreted aspartic protease 1 (391 aa).

An N-terminal signal peptide occupies residues 1-18; that stretch reads MFLKNIFIALAIALLVDA. Residues 19-50 constitute a propeptide, activation peptide; sequence SPAKRSPGFVTLDFDVIKTPVNATGQEGKVKR. An N-linked (GlcNAc...) asparagine glycan is attached at N40. One can recognise a Peptidase A1 domain in the interval 64 to 377; that stretch reads YAADITIGSN…DLDDDKISLA (314 aa). The active site involves D82. Residue 82 to 84 coordinates pepstatin A; the sequence is DTG. C97 and C109 are oxidised to a cystine. 135–136 serves as a coordination point for pepstatin A; it reads GD. Zn(2+)-binding residues include D241 and D263. The active site involves D267. A pepstatin A-binding site is contributed by 267 to 271; that stretch reads DSGTT. C305 and C343 are joined by a disulfide.

It belongs to the peptidase A1 family. As to quaternary structure, monomer.

It is found in the secreted. It carries out the reaction Preferential cleavage at the carboxyl of hydrophobic amino acids, but fails to cleave 15-Leu-|-Tyr-16, 16-Tyr-|-Leu-17 and 24-Phe-|-Phe-25 of insulin B chain. Activates trypsinogen, and degrades keratin.. Its activity is regulated as follows. Inhibited by pepstatin A analogs and squash aspartic peptidase inhibitor (SQAPI). Its function is as follows. Secreted aspartic peptidases (SAPs) are a group of ten acidic hydrolases considered as key virulence factors. These enzymes supply the fungus with nutrient amino acids as well as are able to degrade the selected host's proteins involved in the immune defense. Induces host inflammatory cytokine production in a proteolytic activity-independent way. Plays a role in tissue damage during superficial infection. Moreover, acts toward human hemoglobin though limited proteolysis to generate a variety of antimicrobial hemocidins, enabling to compete with the other microorganisms of the same physiological niche using the microbicidal peptides generated from the host protein. Plays a key role in defense against host by cleaving histatin-5 (Hst 5), a peptide from human saliva that carries out fungicidal activity. The cleavage rate decreases in an order of SAP2 &gt; SAP9 &gt; SAP3 &gt; SAP7 &gt; SAP4 &gt; SAP1 &gt; SAP8. The first cleavage occurs between residues 'Lys-17' and 'His-18' of Hst 5, giving DSHAKRHHGYKRKFHEK and HHSHRGY peptides. Further fragmentation by SAP1 results in AKRHHGYKRKFHEK and AKRHHGY products. In Candida albicans (strain SC5314 / ATCC MYA-2876) (Yeast), this protein is Secreted aspartic protease 1.